Reading from the N-terminus, the 567-residue chain is Geranylgeranyl transferase type-2 subunit alpha (567 aa).

6 PFTA repeats span residues 44–78 (LDES…QLET), 88–122 (LVKA…RLPE), 124–158 (NWTR…QAAV), 159–193 (PPAE…QLHP), 207–241 (VLLK…RADP), and 363–397 (VLQS…ALDP). S98 is subject to Phosphoserine. 5 LRR repeats span residues 442 to 463 (EVRV…EQLL), 464 to 486 (LVTH…AALR), 487 to 508 (CLEV…TNLP), 509 to 530 (RLQE…QPLA), and 534 to 555 (RLVL…LEQL).

The protein belongs to the protein prenyltransferase subunit alpha family. In terms of assembly, heterotrimer composed of RABGGTA, RABGGTB and CHM; within this trimer, RABGGTA and RABGGTB form the catalytic component B, while CHM (component A) mediates peptide substrate binding. The Rab GGTase dimer (RGGT) interacts with CHM (component A) prior to Rab protein binding; the association is stabilized by geranylgeranyl pyrophosphate (GGpp). The CHM:RGGT:Rab complex is destabilized by GGpp. Interacts with non-phosphorylated form of RAB8A; phosphorylation of RAB8A at 'Thr-72' disrupts this interaction.

The catalysed reaction is geranylgeranyl diphosphate + L-cysteinyl-[protein] = S-geranylgeranyl-L-cysteinyl-[protein] + diphosphate. Its activity is regulated as follows. The enzymatic reaction requires the aid of a Rab escort protein (also called component A), such as CHM. Catalyzes the transfer of a geranylgeranyl moiety from geranylgeranyl diphosphate to both cysteines of Rab proteins with the C-terminal sequence -XXCC, -XCXC and -CCXX, such as RAB1A, RAB3A, RAB5A and RAB7A. This is Geranylgeranyl transferase type-2 subunit alpha (RABGGTA) from Homo sapiens (Human).